The chain runs to 104 residues: UPF0235 protein RBE_0633 (104 aa).

The protein belongs to the UPF0235 family.

The polypeptide is UPF0235 protein RBE_0633 (Rickettsia bellii (strain RML369-C)).